The sequence spans 133 residues: Nickel-responsive regulator (133 aa).

His-76, His-87, His-89, and Cys-95 together coordinate Ni(2+).

This sequence belongs to the transcriptional regulatory CopG/NikR family. Homotetramer. It depends on Ni(2+) as a cofactor.

In terms of biological role, transcriptional repressor of the nikABCDE operon. Is active in the presence of excessive concentrations of intracellular nickel. The chain is Nickel-responsive regulator from Escherichia fergusonii (strain ATCC 35469 / DSM 13698 / CCUG 18766 / IAM 14443 / JCM 21226 / LMG 7866 / NBRC 102419 / NCTC 12128 / CDC 0568-73).